Reading from the N-terminus, the 119-residue chain is Nucleoid-associated protein Cphy_0047 (119 aa).

The tract at residues 23-45 (AQRMQKQMEDKTKEMEEKQWEAT) is disordered. Basic and acidic residues predominate over residues 28 to 42 (KQMEDKTKEMEEKQW).

This sequence belongs to the YbaB/EbfC family. Homodimer.

It localises to the cytoplasm. Its subcellular location is the nucleoid. Its function is as follows. Binds to DNA and alters its conformation. May be involved in regulation of gene expression, nucleoid organization and DNA protection. The sequence is that of Nucleoid-associated protein Cphy_0047 from Lachnoclostridium phytofermentans (strain ATCC 700394 / DSM 18823 / ISDg) (Clostridium phytofermentans).